The following is a 493-amino-acid chain: 3-octaprenyl-4-hydroxybenzoate carboxy-lyase (493 aa).

Asn172 is a binding site for Mn(2+). Residues 175-177 (IYR), 189-191 (RWL), and 194-195 (RG) contribute to the prenylated FMN site. Glu238 contributes to the Mn(2+) binding site. Asp287 (proton donor) is an active-site residue.

It belongs to the UbiD family. In terms of assembly, homohexamer. Prenylated FMN serves as cofactor. Mn(2+) is required as a cofactor.

It is found in the cell membrane. It carries out the reaction a 4-hydroxy-3-(all-trans-polyprenyl)benzoate + H(+) = a 2-(all-trans-polyprenyl)phenol + CO2. Its pathway is cofactor biosynthesis; ubiquinone biosynthesis. In terms of biological role, catalyzes the decarboxylation of 3-octaprenyl-4-hydroxy benzoate to 2-octaprenylphenol, an intermediate step in ubiquinone biosynthesis. This is 3-octaprenyl-4-hydroxybenzoate carboxy-lyase from Shewanella sp. (strain MR-4).